The sequence spans 647 residues: MGKIRKLDDQLSNLIAAGEVVERPASVVKELVENSIDANSTSIEIHLEEAGLSKIRIIDNGDGIAEEDCIVAFERHATSKIKDENDLFRIRTLGFRGEALPSIASVSELELITSTGDAPGTHLIIKGGDIIKQEKTASRKGTDITVQNLFFNTPARLKYMKTIHTELGNITDIVYRIAMSHPEVSLKLFHNEKKLLHTSGNGDVRQVLASIYSIQVAKKLVPIEAESLDFTIKGYVTLPEVTRASRNYMSTIVNGRYVRNFVLMKAIQQGYHTLLPVGRYPIGFLSIEMDPMLVDVNVHPAKLEVRFSKEQELLKLIEETLQAAFKKIQLIPDAGVTTKKKEKDESVQEQFQFEHAKPKEPSMPEIVLPTGMDEKQEEPLAVKQPTQLWQPPKQEWQPPQSLVREEQSWQPSTKPIIEEPIQEEKSWDSNEEGFELEELEEEVREIKEIEMNGNDLPPLYPIGQMHGTYIFAQNDKGLYMIDQHAAQERINYEYFRDKVGRVAQEVQELLVPYRIDLSLTEFLRVEEQLEELKKVGLFLEQFGHQSFIVRSHPTWFPKGQETEIIDEMMEQVVKLKKVDIKKLREEAAIMMSCKASIKANQYLTNDQIFALLEELRTTTNPYTCPHGRPILVHHSTYELEKMFKRVM.

The protein belongs to the DNA mismatch repair MutL/HexB family.

Its function is as follows. This protein is involved in the repair of mismatches in DNA. It is required for dam-dependent methyl-directed DNA mismatch repair. May act as a 'molecular matchmaker', a protein that promotes the formation of a stable complex between two or more DNA-binding proteins in an ATP-dependent manner without itself being part of a final effector complex. The protein is DNA mismatch repair protein MutL of Bacillus thuringiensis (strain Al Hakam).